A 481-amino-acid polypeptide reads, in one-letter code: Glutamyl-tRNA(Gln) amidotransferase subunit A (481 aa).

Active-site charge relay system residues include lysine 76 and serine 151. Serine 175 serves as the catalytic Acyl-ester intermediate.

Belongs to the amidase family. GatA subfamily. In terms of assembly, heterotrimer of A, B and C subunits.

It carries out the reaction L-glutamyl-tRNA(Gln) + L-glutamine + ATP + H2O = L-glutaminyl-tRNA(Gln) + L-glutamate + ADP + phosphate + H(+). Allows the formation of correctly charged Gln-tRNA(Gln) through the transamidation of misacylated Glu-tRNA(Gln) in organisms which lack glutaminyl-tRNA synthetase. The reaction takes place in the presence of glutamine and ATP through an activated gamma-phospho-Glu-tRNA(Gln). The sequence is that of Glutamyl-tRNA(Gln) amidotransferase subunit A from Neisseria meningitidis serogroup C / serotype 2a (strain ATCC 700532 / DSM 15464 / FAM18).